An 83-amino-acid polypeptide reads, in one-letter code: Large ribosomal subunit protein bL31B (83 aa).

The protein belongs to the bacterial ribosomal protein bL31 family. Type B subfamily. As to quaternary structure, part of the 50S ribosomal subunit.

The chain is Large ribosomal subunit protein bL31B from Leifsonia xyli subsp. xyli (strain CTCB07).